Consider the following 308-residue polypeptide: Bifunctional protein FolD (308 aa).

Residues 171–173 (GRS), S198, and I239 contribute to the NADP(+) site.

It belongs to the tetrahydrofolate dehydrogenase/cyclohydrolase family. Homodimer.

It carries out the reaction (6R)-5,10-methylene-5,6,7,8-tetrahydrofolate + NADP(+) = (6R)-5,10-methenyltetrahydrofolate + NADPH. The catalysed reaction is (6R)-5,10-methenyltetrahydrofolate + H2O = (6R)-10-formyltetrahydrofolate + H(+). The protein operates within one-carbon metabolism; tetrahydrofolate interconversion. In terms of biological role, catalyzes the oxidation of 5,10-methylenetetrahydrofolate to 5,10-methenyltetrahydrofolate and then the hydrolysis of 5,10-methenyltetrahydrofolate to 10-formyltetrahydrofolate. The protein is Bifunctional protein FolD of Borreliella burgdorferi (strain ZS7) (Borrelia burgdorferi).